A 181-amino-acid polypeptide reads, in one-letter code: Oleosin (181 aa).

The tract at residues 1 to 28 (TTTTYDRHFTTTQPHYRQDDRSRYDQQT) is disordered. The polar stretch occupies residues 1–38 (TTTTYDRHFTTTQPHYRQDDRSRYDQQTHSQSTSRTLA). Over residues 16–26 (YRQDDRSRYDQ) the composition is skewed to basic and acidic residues. 3 helical membrane passes run 38–58 (AIIALLPVGGILLGLAALTFI), 69–89 (PLFVIFSPIIVPAVLTIGLAV), and 90–110 (TGFLASGTFGLTGLSSLSYLF). Residues 39-110 (IIALLPVGGI…TGLSSLSYLF (72 aa)) form a hydrophobic region. Residues 155 to 181 (EMGDQGQVGVHAQVGGGKEGRKSGDRT) are disordered. The segment covering 158-167 (DQGQVGVHAQ) has biased composition (low complexity). Residues 172 to 181 (KEGRKSGDRT) are compositionally biased toward basic and acidic residues.

This sequence belongs to the oleosin family.

The protein resides in the lipid droplet. It is found in the membrane. In terms of biological role, may have a structural role to stabilize the lipid body during desiccation of the seed by preventing coalescence of the oil. Probably interacts with both lipid and phospholipid moieties of lipid bodies. May also provide recognition signals for specific lipase anchorage in lipolysis during seedling growth. In Helianthus annuus (Common sunflower), this protein is Oleosin.